The following is a 512-amino-acid chain: Methionine--tRNA ligase (512 aa).

The 'HIGH' region motif lies at 11–21; the sequence is YYASGKPHIGH. The Zn(2+) site is built by Cys-126, Cys-129, Cys-143, and His-147. A 'KMSKS' region motif is present at residues 301 to 305; the sequence is KMSKS. Lys-304 provides a ligand contact to ATP.

This sequence belongs to the class-I aminoacyl-tRNA synthetase family. MetG type 2A subfamily. Monomer. It depends on Zn(2+) as a cofactor.

It localises to the cytoplasm. The enzyme catalyses tRNA(Met) + L-methionine + ATP = L-methionyl-tRNA(Met) + AMP + diphosphate. Is required not only for elongation of protein synthesis but also for the initiation of all mRNA translation through initiator tRNA(fMet) aminoacylation. The sequence is that of Methionine--tRNA ligase (metG) from Mycoplasma genitalium (strain ATCC 33530 / DSM 19775 / NCTC 10195 / G37) (Mycoplasmoides genitalium).